A 319-amino-acid polypeptide reads, in one-letter code: Serine acetyltransferase, plasmid (319 aa).

It belongs to the transferase hexapeptide repeat family.

The protein resides in the cytoplasm. The catalysed reaction is L-serine + acetyl-CoA = O-acetyl-L-serine + CoA. Its pathway is amino-acid biosynthesis; L-cysteine biosynthesis; L-cysteine from L-serine: step 1/2. This Synechococcus elongatus (strain ATCC 33912 / PCC 7942 / FACHB-805) (Anacystis nidulans R2) protein is Serine acetyltransferase, plasmid (srpH).